The sequence spans 270 residues: Mevalonyl-coenzyme A hydratase sidH (270 aa).

Residues S268–L270 carry the PTS1-type peroxisomal targeting signal motif.

It belongs to the enoyl-CoA hydratase/isomerase family.

Its subcellular location is the peroxisome. Its pathway is siderophore biosynthesis. Its function is as follows. Mevalonyl-coenzyme A hydratase; part of the siderophore biosynthetic pathway. Aspergillus fumigatus produces 4 types of siderophores, low-molecular-mass iron chelators, including excreted fusarinine C (FsC) and triacetylfusarinine C (TAFC) for iron uptake and intacellular ferricrocin (FC) for hyphal and hydroxyferricrocin (HFC) for conidial iron distribution and storage. TAFC consists of 3 N(2)-acetyl-N(5)-anhydromevalonyl-N(5)-hydroxyornithine residues cyclically linked by ester bonds; FC is a cyclic hexapeptide with the structure Gly-Ser-Gly-(N(5)-acetyl-N(5)-hydroxyornithine)x3. The biosynthesis of all four siderophores depends on the hydroxylation of ornithine, catalyzed by the monooxygenase sidA. Subsequently, the pathways for biosynthesis of extra- and intracellular siderophores split. For biosynthesis of extracellular siderophores, the transacylase sidF transfers anhydromevalonyl to N(5)-hydroxyornithine. The required anhydromevalonyl-CoA moiety is derived from mevalonate by CoA ligation and dehydration catalyzed by sidI and sidH respectively. The acetylation of N(5)-hydroxyornithine for FC biosynthesis involves the constitutively expressed sidL. FC is hydroxylated to HFC by an as yet uncharacterized enzyme during conidiation. Assembly of fusarinine C (FsC) and FC is catalyzed by two different nonribosomal peptide synthetases (NRPS), sidD and sidC respectively. Subsequently, sidG catalyzes N2-acetylation of FsC for forming TAFC. Both extra- and intracellular siderophores are crucial for growth during iron limitation and virulence. This Aspergillus fumigatus (strain ATCC MYA-4609 / CBS 101355 / FGSC A1100 / Af293) (Neosartorya fumigata) protein is Mevalonyl-coenzyme A hydratase sidH.